Here is a 471-residue protein sequence, read N- to C-terminus: Methionine aminopeptidase 2 (471 aa).

Disordered stretches follow at residues 16 to 80 (VVDD…IDRF) and 92 to 139 (CEHP…DFNR). Acidic residues predominate over residues 32–47 (EDGDDNDDAVNEGEAV). The segment covering 52–65 (KKKKKKNKKKKKKG) has biased composition (basic residues). Residues 119 to 139 (AEERAKDDAKHGSDDPLDFNR) show a composition bias toward basic and acidic residues. Substrate is bound at residue His-224. Positions 244, 255, and 324 each coordinate a divalent metal cation. His-332 contacts substrate. Residues Glu-357 and Glu-452 each contribute to the a divalent metal cation site.

The protein belongs to the peptidase M24A family. Methionine aminopeptidase eukaryotic type 2 subfamily. Co(2+) serves as cofactor. It depends on Zn(2+) as a cofactor. The cofactor is Mn(2+). Fe(2+) is required as a cofactor.

The protein localises to the cytoplasm. The enzyme catalyses Release of N-terminal amino acids, preferentially methionine, from peptides and arylamides.. Functionally, cotranslationally removes the N-terminal methionine from nascent proteins. The N-terminal methionine is often cleaved when the second residue in the primary sequence is small and uncharged (Met-Ala-, Cys, Gly, Pro, Ser, Thr, or Val). This chain is Methionine aminopeptidase 2, found in Yarrowia lipolytica (strain CLIB 122 / E 150) (Yeast).